Consider the following 159-residue polypeptide: Ribonuclease P protein component 2 (159 aa).

Belongs to the eukaryotic/archaeal RNase P protein component 2 family. In terms of assembly, consists of a catalytic RNA component and at least 4-5 protein subunits.

The protein localises to the cytoplasm. It carries out the reaction Endonucleolytic cleavage of RNA, removing 5'-extranucleotides from tRNA precursor.. Part of ribonuclease P, a protein complex that generates mature tRNA molecules by cleaving their 5'-ends. This Halorubrum lacusprofundi (strain ATCC 49239 / DSM 5036 / JCM 8891 / ACAM 34) protein is Ribonuclease P protein component 2.